Here is a 370-residue protein sequence, read N- to C-terminus: Chloromuconate cycloisomerase (370 aa).

Lys165 acts as the Proton acceptor in catalysis. The Mn(2+) site is built by Asp194, Glu220, and Asp245. Catalysis depends on Glu323, which acts as the Proton donor.

It belongs to the mandelate racemase/muconate lactonizing enzyme family. The cofactor is Mn(2+).

It carries out the reaction 2-[(2R)-2-chloro-2,5-dihydro-5-oxofuryl]acetate = 3-chloro-cis,cis-muconate + H(+). It functions in the pathway aromatic compound metabolism; 3-chlorocatechol degradation. The chain is Chloromuconate cycloisomerase (tfdD) from Delftia acidovorans (Pseudomonas acidovorans).